Here is a 78-residue protein sequence, read N- to C-terminus: Ferredoxin oxidoreductase 2 subunit ForD (78 aa).

2 consecutive 4Fe-4S ferredoxin-type domains span residues 3–35 (FVADVKEKECAQYNCKQCVLFCPEPNCLNFKAS) and 37–66 (NSAWVWYDRCKGCEICVYVCSDLLKRHCIE). Residues C12, C17, C20, C24, C46, C49, C52, and C56 each coordinate [4Fe-4S] cluster.

Heterotetramer of one alpha, one beta, one delta and one gamma chain. [4Fe-4S] cluster serves as cofactor.

In Aquifex aeolicus (strain VF5), this protein is Ferredoxin oxidoreductase 2 subunit ForD (forD2).